The primary structure comprises 535 residues: CTP synthase (535 aa).

Residues 1-267 (MTKYIFVTGG…DKLVCEHMKL (267 aa)) are amidoligase domain. S13 contacts CTP. Position 13 (S13) interacts with UTP. An ATP-binding site is contributed by 14 to 19 (SLGKGI). Y54 serves as a coordination point for L-glutamine. An ATP-binding site is contributed by D71. Residues D71 and E141 each contribute to the Mg(2+) site. Residues 148-150 (DIE), 188-193 (KTKPTQ), and K224 contribute to the CTP site. Residues 188 to 193 (KTKPTQ) and K224 contribute to the UTP site. One can recognise a Glutamine amidotransferase type-1 domain in the interval 292-534 (TIGLVGKYVE…IGASVEAANQ (243 aa)). G354 serves as a coordination point for L-glutamine. C381 (nucleophile; for glutamine hydrolysis) is an active-site residue. L-glutamine is bound by residues 382–385 (LGMQ), E405, and R462. Active-site residues include H507 and E509.

Belongs to the CTP synthase family. In terms of assembly, homotetramer. Interacts with BrxC.

It catalyses the reaction UTP + L-glutamine + ATP + H2O = CTP + L-glutamate + ADP + phosphate + 2 H(+). The catalysed reaction is L-glutamine + H2O = L-glutamate + NH4(+). It carries out the reaction UTP + NH4(+) + ATP = CTP + ADP + phosphate + 2 H(+). The protein operates within pyrimidine metabolism; CTP biosynthesis via de novo pathway; CTP from UDP: step 2/2. With respect to regulation, allosterically activated by GTP, when glutamine is the substrate; GTP has no effect on the reaction when ammonia is the substrate. The allosteric effector GTP functions by stabilizing the protein conformation that binds the tetrahedral intermediate(s) formed during glutamine hydrolysis. Inhibited by the product CTP, via allosteric rather than competitive inhibition. Catalyzes the ATP-dependent amination of UTP to CTP with either L-glutamine or ammonia as the source of nitrogen. Regulates intracellular CTP levels through interactions with the four ribonucleotide triphosphates. The polypeptide is CTP synthase (Bacillus subtilis (strain 168)).